The chain runs to 341 residues: UDP-glucose 4-epimerase (341 aa).

This sequence belongs to the polysaccharide synthase family.

The enzyme catalyses UDP-alpha-D-glucose = UDP-alpha-D-galactose. Its function is as follows. Epimerizes UDP-galactose to UDP-glucose. This Rickettsia conorii (strain ATCC VR-613 / Malish 7) protein is UDP-glucose 4-epimerase (capD).